The following is a 162-amino-acid chain: Functional amyloid chaperone FapA (162 aa).

A signal peptide spans 1 to 28 (MSGSSLRIVVPALLVIVGSVPVSLPAHA).

This sequence belongs to the FapA family. Monomer in solution. Interacts with FapC but not FapB in vitro.

The protein resides in the periplasm. Functionally, an intrinsically disordered chaperone for fibril amyloid FapC that guards against fibrillation within the periplasm. Upon overexpression of the endogenous six-gene locus (fapA-fapF), cells form large clumps during liquid growth, make large amounts of biofilm and produce amyloid fibrils. The sequence is that of Functional amyloid chaperone FapA from Pseudomonas aeruginosa (strain ATCC 15692 / DSM 22644 / CIP 104116 / JCM 14847 / LMG 12228 / 1C / PRS 101 / PAO1).